A 912-amino-acid polypeptide reads, in one-letter code: MFWVLVLLSFIVLIGDGMISEGAGLRPRYVDVGAIFSLGTLQGEVTNIAMKAAEEDVNSDPSFLGGSKLRITTYDAKRNGFLTIMGALQFMETDAVAIIGPQTSIMAHVLSHLANELSVPMLSFTALDPSLSALQFPFFVQTAPSDLFLMRAIAEMISYYGWSEVIALYNDDDNSRNGITALGDELEGRRCKISYKAVLPLDVVITSPREIINELVKIQGMESRVIIVNTFPKTGKKIFEEAQKLGMMEKGYVWIATTWLTSLLDSVNPLPAKTAESLRGVLTLRIHTPNSKKKKDFVARWNKLSNGTVGLNVYGLYAYDTVWIIARAVKRLLDSRANISFSSDPKLTSMKGGGSLNLGALSIFDQGSQFLDYIVNTNMTGVTGQIQFLPDRSMIQPSYDIINVVDDGFRQIGYWSNHSGLSIIPPESLYKKLSNRSSSNQHLNNVTWPGGTSETPRGWVFPNNGRRLRIGVPDRASFKEFVSRLDGSNKVQGYAIDVFEAAVKLISYPVPHEFVLFGDGLKNPNFNEFVNNVTIGVFDAVVGDIAIVTKRTRIVDFTQPYIESGLVVVAPVTKLNDTPWAFLRPFTPPMWAVTAAFFLIVGSVIWILEHRINDEFRGPPRKQIVTILWFSFSTMFFSHRENTVSTLGRAVLLIWLFVVLIITSSYTASLTSILTVQQLNSPIRGVDTLISSSGRVGFQVGSYAENYMIDELNIARSRLVPLGSPKEYAAALQNGTVAAIVDERPYVDLFLSEFCGFAIRGQEFTRSGWGFAFPRDSPLAIDMSTAILGLSETGQLQKIHDKWLSRSNCSNLNGSVSDEDSEQLKLRSFWGLFLVCGISCFIALFIYFFKIVRDFFRHGKYDEEATVPSPESSRSKSLQTFLAYFDEKEDESKRRMKRKRNDDLSLKPSRPI.

Residues 1–22 form the signal peptide; it reads MFWVLVLLSFIVLIGDGMISEG. Topologically, residues 23–587 are extracellular; it reads AGLRPRYVDV…TPWAFLRPFT (565 aa). N306, N338, N378, N417, N435, N445, and N532 each carry an N-linked (GlcNAc...) asparagine glycan. Glycine-binding positions include 544–546 and R551; that span reads DIA. L-methionine-binding positions include 544 to 546 and R551; that span reads DIA. A helical transmembrane segment spans residues 588–608; it reads PPMWAVTAAFFLIVGSVIWIL. At 609–617 the chain is on the cytoplasmic side; the sequence is EHRINDEFR. Residues 618-638 traverse the membrane as a helical segment; the sequence is GPPRKQIVTILWFSFSTMFFS. Residues 639 to 649 are Cytoplasmic-facing; it reads HRENTVSTLGR. A helical membrane pass occupies residues 650–670; it reads AVLLIWLFVVLIITSSYTASL. Residues 671-828 lie on the Extracellular side of the membrane; the sequence is TSILTVQQLN…EDSEQLKLRS (158 aa). Y703 lines the glycine pocket. Residue Y703 participates in L-methionine binding. An N-linked (GlcNAc...) asparagine glycan is attached at N734. Position 743–746 (743–746) interacts with glycine; the sequence is ERPY. An L-methionine-binding site is contributed by 743 to 746; sequence ERPY. A disulfide bond links C755 and C809. N-linked (GlcNAc...) asparagine glycans are attached at residues N808 and N813. Residues 829–849 form a helical membrane-spanning segment; that stretch reads FWGLFLVCGISCFIALFIYFF. At 850–912 the chain is on the cytoplasmic side; it reads KIVRDFFRHG…DLSLKPSRPI (63 aa). The interval 888-912 is disordered; that stretch reads KEDESKRRMKRKRNDDLSLKPSRPI.

Belongs to the glutamate-gated ion channel (TC 1.A.10.1) family. Forms a heteromeric channel with GLR3.4. As to expression, expressed in leaves and siliques, and at lower level in flowers and roots. Detected in the vascular tissues of both shoots and roots. Expressed in root phloem.

The protein resides in the cell membrane. Its function is as follows. Glutamate-gated receptor that probably acts as a non-selective cation channel. May be involved in light-signal transduction and calcium homeostasis via the regulation of calcium influx into cells. Could play a role in calcium unloading from the xylem vessels. Acts as a negative regulator of lateral root initiation and development. May restrict primordia numbers and position along the root axis by a signaling process originating in the phloem. This Arabidopsis thaliana (Mouse-ear cress) protein is Glutamate receptor 3.2.